The following is a 261-amino-acid chain: X-box-binding protein 1 (261 aa).

Topologically, residues 1-185 (MVVVAPAQSP…VQAQLSPLQN (185 aa)) are cytoplasmic. Positions 27–37 (TGGAPAGRALP) are enriched in low complexity. A disordered region spans residues 27-65 (TGGAPAGRALPVMVPGQQGASPEGASGVPPQARKRQRLT). Phosphoserine is present on residues S47 and S68. The 64-residue stretch at 70–133 (EEKALRRKLK…HGLVVENQEL (64 aa)) folds into the bZIP domain. The interval 72-94 (KALRRKLKNRVAAQTARDRKKAR) is basic motif. Positions 76–92 (RKLKNRVAAQTARDRKK) are nuclear localization signal (NLS). Residues 98–133 (LEQQVVDLEEENQKLLLENQLLREKTHGLVVENQEL) are leucine-zipper. Residues 186-203 (ISPWTLMALTLQTLSLTS) traverse the membrane as a helical; Signal-anchor for type II membrane protein segment. Over 204-261 (CWAFCSTWTQSCSSDVLPQSLPAWSSSQKWTQKDPVPYRPPLLHPWGRHQPSWKPLMN) the chain is Lumenal.

This sequence belongs to the bZIP family. As to quaternary structure, isoform 1 interacts with HM13. Isoform 1 interacts with RNF139; the interaction induces ubiquitination and degradation of isoform 1. Isoform 1 interacts (via luminal domain) with DERL1; the interaction obviates the need for ectodomain shedding prior HM13/SPP-mediated XBP1 isoform 1 cleavage. Isoform 1 interacts with HDAC3 and AKT1; the interactions occur in endothelial cell (EC) under disturbed flow. Isoform 1 interacts with the oncoprotein FOS. Interacts with SIRT1. In terms of processing, isoform 1 is ubiquitinated, leading to proteasome-mediated degradation in response to ER stress. X-box-binding protein 1, cytoplasmic form and luminal form are produced by intramembrane proteolytic cleavage of ER membrane-anchored isoform 1 triggered by HM13/SPP in a DERL1-RNF139-dependent and VCP/p97-independent manner. X-box-binding protein 1, luminal form is ubiquitinated leading to proteasomal degradation. Post-translationally, acetylated by EP300; acetylation positively regulates the transcriptional activity of XBP1. Deacetylated by SIRT1; deacetylation negatively regulates the transcriptional activity of XBP1.

It is found in the nucleus. The protein localises to the endoplasmic reticulum. The protein resides in the cytoplasm. It localises to the endoplasmic reticulum membrane. Its subcellular location is the membrane. Its function is as follows. Functions as a transcription factor during endoplasmic reticulum (ER) stress by regulating the unfolded protein response (UPR). Required for cardiac myogenesis and hepatogenesis during embryonic development, and the development of secretory tissues such as exocrine pancreas and salivary gland. Involved in terminal differentiation of B lymphocytes to plasma cells and production of immunoglobulins. Modulates the cellular response to ER stress in a PIK3R-dependent manner. Binds to the cis-acting X box present in the promoter regions of major histocompatibility complex class II genes. Involved in VEGF-induced endothelial cell (EC) proliferation and retinal blood vessel formation during embryonic development but also for angiogenesis in adult tissues under ischemic conditions. Functions also as a major regulator of the UPR in obesity-induced insulin resistance and type 2 diabetes for the management of obesity and diabetes prevention. In terms of biological role, acts as a weak transcriptional factor. Together with HDAC3, contributes to the activation of NFE2L2-mediated HMOX1 transcription factor gene expression in a PI(3)K/mTORC2/Akt-dependent signaling pathway leading to EC survival under disturbed flow/oxidative stress. Binds to the ER stress response element (ERSE) upon ER stress. Binds to the consensus 5'-GATGACGTG[TG]N(3)[AT]T-3' sequence related to cAMP responsive element (CRE)-like sequences. Associates preferentially to the HDAC3 gene promoter region in a static flow-dependent manner. Binds to the CDH5/VE-cadherin gene promoter region. This is X-box-binding protein 1 from Bos taurus (Bovine).